Reading from the N-terminus, the 252-residue chain is Triosephosphate isomerase (252 aa).

10 to 12 lines the substrate pocket; sequence NWK. Catalysis depends on H96, which acts as the Electrophile. The active-site Proton acceptor is E168. Residues G174, S213, and 234–235 contribute to the substrate site; that span reads GG.

This sequence belongs to the triosephosphate isomerase family. In terms of assembly, homodimer.

The protein localises to the cytoplasm. It carries out the reaction D-glyceraldehyde 3-phosphate = dihydroxyacetone phosphate. Its pathway is carbohydrate biosynthesis; gluconeogenesis. It participates in carbohydrate degradation; glycolysis; D-glyceraldehyde 3-phosphate from glycerone phosphate: step 1/1. Functionally, involved in the gluconeogenesis. Catalyzes stereospecifically the conversion of dihydroxyacetone phosphate (DHAP) to D-glyceraldehyde-3-phosphate (G3P). The protein is Triosephosphate isomerase of Idiomarina loihiensis (strain ATCC BAA-735 / DSM 15497 / L2-TR).